A 242-amino-acid chain; its full sequence is Zinc-finger homeodomain protein 11 (242 aa).

The ZF-HD dimerization-type; degenerate zinc finger occupies 31–82; it reads YKECLKNHAANLGGHALDGCGEFMPSPTATSTDPSSLRCAACGCHRNFHRRD. Disordered stretches follow at residues 83 to 109 and 135 to 161; these read PSEN…SRHV and PGPS…RTRT. Positions 156–213 form a DNA-binding region, homeobox; atypical; sequence RKRTRTKFTPEQKIKMRAFAEKAGWKINGCDEKSVREFCNEVGIERGVLKVWMHNNKY.

In terms of assembly, homo- and heterodimer with other ZFHD proteins. Interacts with HIPP20, HIPP21, HIPP22, HIPP23, HIPP24, HIPP26, HIPP27, HIPP30 and MED25 (via ACID domain). Interacts with NAC019, NAC055 and NAC072 (via NAC binding domain). Binds to ZHD1, ZHD2, ZHD3, ZHD4, ZHD5, ZHD6, ZHD7, ZHD8, ZHD9, ZHD12, ZHD13 and ZHD14. In terms of tissue distribution, expressed in roots, inflorescences, open flowers and seeds. Detected in stems and seedlings.

The protein resides in the nucleus. Its function is as follows. Transcription factor involved in the up-regulation of several stress-inducible genes. Acts as a transcriptional activator by interacting with MED25 and NAC proteins. Involved in increased drought tolerance. In Arabidopsis thaliana (Mouse-ear cress), this protein is Zinc-finger homeodomain protein 11 (ZHD11).